The primary structure comprises 527 residues: Aspartokinase (527 aa).

Thr333 is subject to Phosphothreonine. Residues 442-527 form the ACT domain; sequence LVGKHMKQYI…RLEQLKRLGI (86 aa).

This sequence belongs to the aspartokinase family. In terms of assembly, homohexamer. Interacts with FPR1; the interaction is direct, plays a role in feedback inhibition of aspartokinase by threonine, and inhibited by tacrolimus and sirolimus.

The catalysed reaction is L-aspartate + ATP = 4-phospho-L-aspartate + ADP. It functions in the pathway amino-acid biosynthesis; L-methionine biosynthesis via de novo pathway; L-homoserine from L-aspartate: step 1/3. Its pathway is amino-acid biosynthesis; L-threonine biosynthesis; L-threonine from L-aspartate: step 1/5. Its activity is regulated as follows. Allosterically inhibited by threonine. Its function is as follows. Phosphorylates aspartate, the first step in the biosynthesis of amino acids that derive from aspartate (the aspartate family of amino acids), including methioinine and threonine, the latter of which is a precursor to isoleucine. In Saccharomyces cerevisiae (strain ATCC 204508 / S288c) (Baker's yeast), this protein is Aspartokinase (HOM3).